The chain runs to 31 residues: Cyclotide psybry A (31 aa).

Residues G1–N31 constitute a cross-link (cyclopeptide (Gly-Asn)). 3 disulfide bridges follow: C5-C20, C9-C22, and C15-C28.

This is a cyclic peptide.

Its function is as follows. Probably participates in a plant defense mechanism. In Psychotria brachyceras, this protein is Cyclotide psybry A.